Consider the following 674-residue polypeptide: Leucine-rich repeat transmembrane protein FLRT1 (674 aa).

A signal peptide spans 1 to 51; that stretch reads MVVAHSAATATTTPAATVTATVVMTTATMDLRDWLFLCYGLIAFLTEVIDS. The Extracellular portion of the chain corresponds to 52–552; the sequence is TTCPSVCRCD…QNAGPMAGLP (501 aa). 2 cysteine pairs are disulfide-bonded: cysteine 54–cysteine 60 and cysteine 58–cysteine 67. One can recognise an LRRNT domain in the interval 54-80; the sequence is CPSVCRCDNGFIYCNDRGLTSIPSDIP. 10 LRR repeats span residues 81–105, 106–126, 127–149, 151–175, 176–197, 198–220, 222–246, 247–269, 270–292, and 293–316; these read DDAT…LKTK, VKVQ…INLP, RSLR…SLAR, PLLE…AFAD, SKQL…SGLP, HTLE…AFKG, NSLR…TFSR, LQNL…NLPS, AHLQ…TLAK, and MREL…LFDD. A glycan (N-linked (GlcNAc...) asparagine) is linked at asparagine 305. The 52-residue stretch at 328 to 379 folds into the LRRCT domain; it reads NPWFCGCNLMWLRDWVRARAAVVNVRGLMCQGPEKVRGMAIKDITSEMDECF. Cysteine 332 and cysteine 357 are disulfide-bonded. The 96-residue stretch at 437–532 folds into the Fibronectin type-III domain; sequence KTLVIQVKPL…VCAKAETADS (96 aa). A helical membrane pass occupies residues 553-573; it reads LAGIIGGAVALVFLFLVLGAI. Residues 574–674 are Cytoplasmic-facing; it reads CWYVHRAGEL…GIPDVDYSYT (101 aa). Phosphotyrosine occurs at positions 600, 633, and 671.

As to quaternary structure, interacts with FGFR1. Interacts (via extracellular domain) with ADGRL1/LPHN1 and ADGRL3 (via olfactomedin-like domain). Phosphorylated in response to FGFR1 signaling, but is not a direct substrate of FGFR1 or SRC. A mutant where the Tyr phosphorylation sites have been replaced by Phe displays constitutive FGFR1-dependent activation of downstream MAP kinases. In terms of processing, N-glycosylated. Post-translationally, proteolytic cleavage in the juxtamembrane region gives rise to a soluble ectodomain. In terms of tissue distribution, detected in brain (at protein level).

The protein localises to the cell membrane. The protein resides in the endoplasmic reticulum membrane. Its subcellular location is the cytoplasmic vesicle membrane. It is found in the cytoplasm. It localises to the perinuclear region. The protein localises to the cell junction. The protein resides in the focal adhesion. Its subcellular location is the secreted. It is found in the cell projection. It localises to the neuron projection. Functionally, plays a role in fibroblast growth factor-mediated signaling cascades that lead to the activation of MAP kinases. Promotes neurite outgrowth via FGFR1-mediated activation of downstream MAP kinases. Promotes an increase both in neurite number and in neurite length. May play a role in cell-cell adhesion and cell guidance via its interaction with ADGRL1/LPHN1 and ADGRL3. This Mus musculus (Mouse) protein is Leucine-rich repeat transmembrane protein FLRT1.